The following is a 159-amino-acid chain: Protein Smg homolog (159 aa).

Belongs to the Smg family.

The polypeptide is Protein Smg homolog (Nitrosococcus oceani (strain ATCC 19707 / BCRC 17464 / JCM 30415 / NCIMB 11848 / C-107)).